Consider the following 111-residue polypeptide: Large ribosomal subunit protein uL22 (111 aa).

Belongs to the universal ribosomal protein uL22 family. As to quaternary structure, part of the 50S ribosomal subunit.

Its function is as follows. This protein binds specifically to 23S rRNA; its binding is stimulated by other ribosomal proteins, e.g. L4, L17, and L20. It is important during the early stages of 50S assembly. It makes multiple contacts with different domains of the 23S rRNA in the assembled 50S subunit and ribosome. Functionally, the globular domain of the protein is located near the polypeptide exit tunnel on the outside of the subunit, while an extended beta-hairpin is found that lines the wall of the exit tunnel in the center of the 70S ribosome. This chain is Large ribosomal subunit protein uL22, found in Clostridioides difficile (strain 630) (Peptoclostridium difficile).